The sequence spans 253 residues: MKKELQGALVLVSVSLGNFGDLTARARHLLEYCDILIGEEFRTTSTLLKSLSISKQFLLCNEHTTPEEIRSLGQIVVDSGLTVLVSDAGTPGIEDPGRELVGEVLRRGGRVQSAPGPIAFGAALSISGFKTSPFTFCGFLSRDSSERKLELSRYLKPGHTVVFYETPYRYKAVLRDLDSVLIETGEDRAIFFCLDLTLDSEFQFRGKLGELLKVLDTLPKGNPVIVVSQRKEQRSQRSFSKGDKKPSFKRFKK.

Basic and acidic residues predominate over residues 230 to 246; it reads RKEQRSQRSFSKGDKKP. The interval 230-253 is disordered; it reads RKEQRSQRSFSKGDKKPSFKRFKK.

Belongs to the methyltransferase superfamily. RsmI family.

It is found in the cytoplasm. The catalysed reaction is cytidine(1402) in 16S rRNA + S-adenosyl-L-methionine = 2'-O-methylcytidine(1402) in 16S rRNA + S-adenosyl-L-homocysteine + H(+). Its function is as follows. Catalyzes the 2'-O-methylation of the ribose of cytidine 1402 (C1402) in 16S rRNA. This is Ribosomal RNA small subunit methyltransferase I from Leptospira borgpetersenii serovar Hardjo-bovis (strain L550).